Consider the following 98-residue polypeptide: Integration host factor subunit beta (98 aa).

It belongs to the bacterial histone-like protein family. As to quaternary structure, heterodimer of an alpha and a beta chain.

Functionally, this protein is one of the two subunits of integration host factor, a specific DNA-binding protein that functions in genetic recombination as well as in transcriptional and translational control. This is Integration host factor subunit beta from Pseudomonas fluorescens (strain SBW25).